We begin with the raw amino-acid sequence, 893 residues long: DNA mismatch repair protein MutS (893 aa).

637–644 (GPNMGGKS) contacts ATP.

It belongs to the DNA mismatch repair MutS family.

Its function is as follows. This protein is involved in the repair of mismatches in DNA. It is possible that it carries out the mismatch recognition step. This protein has a weak ATPase activity. This Burkholderia thailandensis (strain ATCC 700388 / DSM 13276 / CCUG 48851 / CIP 106301 / E264) protein is DNA mismatch repair protein MutS.